The sequence spans 406 residues: NADH-quinone oxidoreductase subunit D (406 aa).

The protein belongs to the complex I 49 kDa subunit family. As to quaternary structure, NDH-1 is composed of 14 different subunits. Subunits NuoB, C, D, E, F, and G constitute the peripheral sector of the complex.

It localises to the cell inner membrane. The catalysed reaction is a quinone + NADH + 5 H(+)(in) = a quinol + NAD(+) + 4 H(+)(out). Functionally, NDH-1 shuttles electrons from NADH, via FMN and iron-sulfur (Fe-S) centers, to quinones in the respiratory chain. The immediate electron acceptor for the enzyme in this species is believed to be ubiquinone. Couples the redox reaction to proton translocation (for every two electrons transferred, four hydrogen ions are translocated across the cytoplasmic membrane), and thus conserves the redox energy in a proton gradient. The sequence is that of NADH-quinone oxidoreductase subunit D from Acidiphilium cryptum (strain JF-5).